Reading from the N-terminus, the 463-residue chain is Probable glycosyltransferase 3 (463 aa).

The tract at residues 1-20 (MAVTGGGRPAARQQAARGKQ) is disordered. Topologically, residues 1 to 24 (MAVTGGGRPAARQQAARGKQMQRT) are cytoplasmic. The span at 9 to 20 (PAARQQAARGKQ) shows a compositional bias: low complexity. Residues 25–47 (FNNVKITLICGFITLLVLRGTVG) form a helical; Signal-anchor for type II membrane protein membrane-spanning segment. Residues 48–463 (INLLTYGVGG…ALKMDAKIES (416 aa)) lie on the Lumenal side of the membrane. A disordered region spans residues 82 to 125 (EIRSDTDDDDDDEEEEPLGVDASTTTTTNSTTTTATAARRRSSN). Residues 87 to 99 (TDDDDDDEEEEPL) are compositionally biased toward acidic residues. Positions 103–118 (ASTTTTTNSTTTTATA) are enriched in low complexity. Residues N110, N125, and N442 are each glycosylated (N-linked (GlcNAc...) asparagine).

The protein belongs to the glycosyltransferase 34 family.

The protein resides in the golgi apparatus membrane. Probable glycosyltransferase that may be involved in the biosynthesis of xyloglucan. This Oryza sativa subsp. indica (Rice) protein is Probable glycosyltransferase 3.